Here is a 446-residue protein sequence, read N- to C-terminus: Kynurenine 3-monooxygenase (446 aa).

It belongs to the aromatic-ring hydroxylase family. KMO subfamily. Requires FAD as cofactor.

It catalyses the reaction L-kynurenine + NADPH + O2 + H(+) = 3-hydroxy-L-kynurenine + NADP(+) + H2O. The protein operates within cofactor biosynthesis; NAD(+) biosynthesis; quinolinate from L-kynurenine: step 1/3. Catalyzes the hydroxylation of L-kynurenine (L-Kyn) to form 3-hydroxy-L-kynurenine (L-3OHKyn). Required for synthesis of quinolinic acid. The sequence is that of Kynurenine 3-monooxygenase from Flavobacterium johnsoniae (strain ATCC 17061 / DSM 2064 / JCM 8514 / BCRC 14874 / CCUG 350202 / NBRC 14942 / NCIMB 11054 / UW101) (Cytophaga johnsonae).